Here is a 213-residue protein sequence, read N- to C-terminus: tRNA (guanine-N(7)-)-methyltransferase (213 aa).

S-adenosyl-L-methionine-binding residues include E38, E63, D91, and D113. D113 is a catalytic residue. Residues K117, D149, and 192-195 (TEYE) each bind substrate.

This sequence belongs to the class I-like SAM-binding methyltransferase superfamily. TrmB family.

The catalysed reaction is guanosine(46) in tRNA + S-adenosyl-L-methionine = N(7)-methylguanosine(46) in tRNA + S-adenosyl-L-homocysteine. The protein operates within tRNA modification; N(7)-methylguanine-tRNA biosynthesis. Catalyzes the formation of N(7)-methylguanine at position 46 (m7G46) in tRNA. This Mycoplasmoides gallisepticum (strain R(low / passage 15 / clone 2)) (Mycoplasma gallisepticum) protein is tRNA (guanine-N(7)-)-methyltransferase.